The primary structure comprises 449 residues: Required for meiotic nuclear division protein 1 homolog (449 aa).

Residues 1 to 16 (MPATLLRAVAGSHRVL) constitute a mitochondrion transit peptide.

This sequence belongs to the RMD1/sif2 family. In terms of assembly, homooligomer.

The protein resides in the mitochondrion. In terms of biological role, required for mitochondrial translation, possibly by coordinating the assembly or maintenance of the mitochondrial ribosome. This Pongo abelii (Sumatran orangutan) protein is Required for meiotic nuclear division protein 1 homolog (RMND1).